We begin with the raw amino-acid sequence, 429 residues long: Palmitoyltransferase SWF1 (429 aa).

At 1-3 (MGT) the chain is on the lumenal side. Residues 4–24 (IAIIAAVILGISFMTFVAFFG) traverse the membrane as a helical segment. At 25-79 (RLPALRNTPISFLHRLIWIHLPNGILTVDRTLTNGRLTTSLTRLGRHLWYDQHPT) the chain is on the cytoplasmic side. The chain crosses the membrane as a helical span at residues 80–100 (ILIFFFLLLSVGEYLYLPVAW). Over 101–112 (PHFSFTHKFFGT) the chain is Lumenal. The helical transmembrane segment at 113-133 (IAILCPYIFLYLSAYTDPGVI) threads the bilayer. Residues 134–201 (NAKTHVREMA…CVGANNQRWF (68 aa)) are Cytoplasmic-facing. The region spanning 156–206 (TSCETCHLLKPARSKHCSICKKCVGRMDHHCIFINNCVGANNQRWFILLLL) is the DHHC domain. A helical membrane pass occupies residues 202 to 222 (ILLLLSTAILTLYGGVLGLVI). Over 223 to 274 (IRAKIQARFPYWTLMPWWTSTQAWNSGDLDFHRWLLLWSWGLQSGVAMGGVT) the chain is Lumenal. The chain crosses the membrane as a helical span at residues 275–295 (LLALLTTPLVWGLLGYHLWLV). Over 296–429 (YCGTTTNESM…ERGRNRRRSS (134 aa)) the chain is Cytoplasmic. Basic and acidic residues predominate over residues 408 to 421 (GRSPVDEREFGRER). The tract at residues 408-429 (GRSPVDEREFGRERGRNRRRSS) is disordered.

Belongs to the DHHC palmitoyltransferase family. SWF1 subfamily.

It localises to the endoplasmic reticulum membrane. It carries out the reaction L-cysteinyl-[protein] + hexadecanoyl-CoA = S-hexadecanoyl-L-cysteinyl-[protein] + CoA. In terms of biological role, palmitoyltransferase that targets several endosomal SNAREs. Palmitoylates the SNAREs at cysteine residues close to the cytoplasmic end of their transmembrane domain. May have a role in the cellular quality control of transmembrane domain-containing proteins. The chain is Palmitoyltransferase SWF1 (swf-1) from Neurospora crassa (strain ATCC 24698 / 74-OR23-1A / CBS 708.71 / DSM 1257 / FGSC 987).